The following is a 366-amino-acid chain: Chorismate synthase (366 aa).

NADP(+)-binding residues include R48 and R54. FMN is bound by residues 125–127 (RSS), 238–239 (NA), G278, 293–297 (KPTSS), and R319.

This sequence belongs to the chorismate synthase family. Homotetramer. FMNH2 serves as cofactor.

It catalyses the reaction 5-O-(1-carboxyvinyl)-3-phosphoshikimate = chorismate + phosphate. It functions in the pathway metabolic intermediate biosynthesis; chorismate biosynthesis; chorismate from D-erythrose 4-phosphate and phosphoenolpyruvate: step 7/7. Catalyzes the anti-1,4-elimination of the C-3 phosphate and the C-6 proR hydrogen from 5-enolpyruvylshikimate-3-phosphate (EPSP) to yield chorismate, which is the branch point compound that serves as the starting substrate for the three terminal pathways of aromatic amino acid biosynthesis. This reaction introduces a second double bond into the aromatic ring system. This chain is Chorismate synthase, found in Paraburkholderia xenovorans (strain LB400).